Here is a 437-residue protein sequence, read N- to C-terminus: Transcription factor E2F2 (437 aa).

The tract at residues 65-105 (ATPHGPEGQVVRCLPAGRLPAKRKLDLEGIGRPVVPEFPTP) is cyclin A/CDK2 binding. The DNA-binding element occupies 107–196 (GKCIRVDGLP…KNNIQWVGRG (90 aa)). Residues 155-176 (LNWAAEVLDVQKRRIYDITNVL) form a leucine-zipper region. The DEF box signature appears at 160–196 (EVLDVQKRRIYDITNVLEGIQLIRKKAKNNIQWVGRG). The interval 197–289 (MFEDPTRPGK…PDRTEDNLQI (93 aa)) is dimerization. Residues 307–368 (VQEPDSPSEE…APPPPSLVPL (62 aa)) are disordered. Positions 315-330 (EEPLPSTSTLCPSPDS) are enriched in low complexity. The segment covering 351-365 (APAPTPQQAPPPPSL) has biased composition (pro residues). Residues 359-437 (APPPPSLVPL…SYDLGDLLIN (79 aa)) are transactivation. The interval 410 to 427 (DDYLWGLEAGEGISDLFD) is retinoblastoma protein binding.

This sequence belongs to the E2F/DP family. As to quaternary structure, component of the DRTF1/E2F transcription factor complex. Forms heterodimers with DP family members. The E2F2 complex binds specifically hypophosphorylated retinoblastoma protein RB1. During the cell cycle, RB1 becomes phosphorylated in mid-to-late G1 phase, detaches from the DRTF1/E2F complex, rendering E2F transcriptionally active. Viral oncoproteins, notably E1A, T-antigen and HPV E7, are capable of sequestering RB1, thus releasing the active complex. Binds EAPP. Post-translationally, phosphorylated by CDK2 and cyclin A-CDK2 in the S-phase. Highest level of expression is found in placenta, low levels are found in lung. Found as well in many immortalized cell lines derived from tumor samples.

It is found in the nucleus. Its function is as follows. Transcription activator that binds DNA cooperatively with DP proteins through the E2 recognition site, 5'-TTTC[CG]CGC-3' found in the promoter region of a number of genes whose products are involved in cell cycle regulation or in DNA replication. The DRTF1/E2F complex functions in the control of cell-cycle progression from g1 to s phase. E2F2 binds specifically to RB1 in a cell-cycle dependent manner. In Homo sapiens (Human), this protein is Transcription factor E2F2 (E2F2).